The sequence spans 192 residues: ATP-dependent Clp protease proteolytic subunit 1 (192 aa).

The Nucleophile role is filled by S92. H117 is an active-site residue.

The protein belongs to the peptidase S14 family. Fourteen ClpP subunits assemble into 2 heptameric rings which stack back to back to give a disk-like structure with a central cavity, resembling the structure of eukaryotic proteasomes.

The protein localises to the cytoplasm. The catalysed reaction is Hydrolysis of proteins to small peptides in the presence of ATP and magnesium. alpha-casein is the usual test substrate. In the absence of ATP, only oligopeptides shorter than five residues are hydrolyzed (such as succinyl-Leu-Tyr-|-NHMec, and Leu-Tyr-Leu-|-Tyr-Trp, in which cleavage of the -Tyr-|-Leu- and -Tyr-|-Trp bonds also occurs).. Functionally, cleaves peptides in various proteins in a process that requires ATP hydrolysis. Has a chymotrypsin-like activity. Plays a major role in the degradation of misfolded proteins. This Chlamydia muridarum (strain MoPn / Nigg) protein is ATP-dependent Clp protease proteolytic subunit 1.